Here is a 118-residue protein sequence, read N- to C-terminus: Large ribosomal subunit protein uL18 (118 aa).

It belongs to the universal ribosomal protein uL18 family. In terms of assembly, part of the 50S ribosomal subunit; part of the 5S rRNA/L5/L18/L25 subcomplex. Contacts the 5S and 23S rRNAs.

This is one of the proteins that bind and probably mediate the attachment of the 5S RNA into the large ribosomal subunit, where it forms part of the central protuberance. The sequence is that of Large ribosomal subunit protein uL18 from Rhizorhabdus wittichii (strain DSM 6014 / CCUG 31198 / JCM 15750 / NBRC 105917 / EY 4224 / RW1) (Sphingomonas wittichii).